Consider the following 162-residue polypeptide: Allophycocyanin subunit beta (162 aa).

Asn-72 bears the N4-methylasparagine mark. Residue Cys-82 coordinates (2R,3E)-phycocyanobilin.

Belongs to the phycobiliprotein family. In terms of assembly, heterohexamer of two alpha chains, one alpha-B chain and three beta chains. Contains one covalently linked phycocyanobilin chromophore. The chromophore is added by phycocyanobilin lyase CpcS 1.

It is found in the cellular thylakoid membrane. Functionally, light-harvesting photosynthetic bile pigment-protein from the phycobiliprotein complex. Allophycocyanin has a maximum absorption at approximately 650 to 653 nanometers. This Nostoc sp. (strain PCC 7120 / SAG 25.82 / UTEX 2576) protein is Allophycocyanin subunit beta (apcB).